A 340-amino-acid chain; its full sequence is Adenosine kinase (340 aa).

Residue aspartate 293 is part of the active site.

The protein belongs to the carbohydrate kinase PfkB family. The cofactor is Mg(2+).

It carries out the reaction adenosine + ATP = AMP + ADP + H(+). It functions in the pathway purine metabolism; AMP biosynthesis via salvage pathway; AMP from adenosine: step 1/1. Its function is as follows. ATP dependent phosphorylation of adenosine and other related nucleoside analogs to monophosphate derivatives. ADO1 does not play a major role in adenine utilization in yeast. Its physiological role could primarily be to recycle adenosine produced by the methyl cycle. This chain is Adenosine kinase, found in Saccharomyces cerevisiae (strain ATCC 204508 / S288c) (Baker's yeast).